Consider the following 566-residue polypeptide: DBIRD complex subunit ZNF326 (566 aa).

2 disordered regions span residues 19–81 and 145–180; these read HCGV…ESYD and RPGF…GRGT. Residues 59–73 show a composition bias toward gly residues; the sequence is SHGGGGGGGGGGGNR. Low complexity predominate over residues 156–165; that stretch reads SYSSYSSFSS. The short motif at 240 to 263 is the Bipartite nuclear localization signal element; that stretch reads KRKMMPQPYNKPGGTFIKKPKMTK. Residues 314–347 form a disordered region; the sequence is FGDSKGEGKSEEEEKRRIEARREKQRRRREKNSE. The segment covering 317–335 has biased composition (basic and acidic residues); the sequence is SKGEGKSEEEEKRRIEARR. 2 C2H2 AKAP95-type zinc fingers span residues 359 to 381 and 452 to 475; these read CSFC…SAAH and CSAC…SPDH. The disordered stretch occupies residues 516–566; the sequence is PFEINDQAQEQQTEEEDKAEEPAEGEEEEEEEEEEETEEQTDFTLDHTEDN. Residues 527–556 are compositionally biased toward acidic residues; it reads QTEEEDKAEEPAEGEEEEEEEEEEETEEQT.

Belongs to the AKAP95 family. Component of the DBIRD complex.

The protein localises to the nucleus. Its function is as follows. Core component of the DBIRD complex, a multiprotein complex that acts at the interface between core mRNP particles and RNA polymerase II (RNAPII) and integrates transcript elongation with the regulation of alternative splicing. In Gallus gallus (Chicken), this protein is DBIRD complex subunit ZNF326 (ZNF326).